Consider the following 102-residue polypeptide: NADH-quinone oxidoreductase subunit K (102 aa).

The next 3 helical transmembrane spans lie at 5 to 25 (ALTGMMIVAAGLFAAGVFGVL), 30 to 50 (ILFQLISLEVALSGPALAFIA), and 63 to 83 (MFVLVLTLAAAEVAVGLALFL).

The protein belongs to the complex I subunit 4L family. In terms of assembly, NDH-1 is composed of 14 different subunits. Subunits NuoA, H, J, K, L, M, N constitute the membrane sector of the complex.

Its subcellular location is the cell inner membrane. It catalyses the reaction a quinone + NADH + 5 H(+)(in) = a quinol + NAD(+) + 4 H(+)(out). Functionally, NDH-1 shuttles electrons from NADH, via FMN and iron-sulfur (Fe-S) centers, to quinones in the respiratory chain. The immediate electron acceptor for the enzyme in this species is believed to be ubiquinone. Couples the redox reaction to proton translocation (for every two electrons transferred, four hydrogen ions are translocated across the cytoplasmic membrane), and thus conserves the redox energy in a proton gradient. The chain is NADH-quinone oxidoreductase subunit K from Rhodopseudomonas palustris (strain BisB18).